The sequence spans 595 residues: Protein halfway (595 aa).

Disordered stretches follow at residues 1 to 42 (MLLT…ADDE) and 64 to 98 (TGAA…PLLP). N250 and N255 each carry an N-linked (GlcNAc...) asparagine glycan. The LRRNT domain occupies 347-402 (ESTKRCMTKCPVIPNYGSCKCRFESIMIIQDDQSKPKCHVDCSNLGLVELPPRLPD). LRR repeat units follow at residues 403 to 424 (NTFV…FQTN), 429 to 450 (NINR…EGTK), and 454 to 475 (NFQR…FLNN). An LRRCT domain is found at 489–538 (NKLQCDCNSAKTLQNWLKERSTDIPDYMEIRCRNIPQSVIELQEAKLCQS).

Functionally, has a role in the ecdysone induced cascade; probably indirect control of 'late' ecdysone genes. This Drosophila pseudoobscura pseudoobscura (Fruit fly) protein is Protein halfway (hfw).